Here is a 227-residue protein sequence, read N- to C-terminus: MAYPLQLGFQDASSPIMEELLHFHDHTLMIVFLISSLVLYIISLMLTTKLTHTSTMDAQEVETIWTILPAIILILIALPSLRILYMMDEINNPSLTVKTMGHQWYWSYEYTDYEELTFDSYMIPTLDLKPGDVRLLEVDNRVVLPMEIPVRMLISSEDVLHSWAVPSLGLKTDAIPGRLNQATLISTRPGLFYGQCSEICGSNHSFMPIVLELVPLKHFENWTTTML.

Residues methionine 1–serine 14 are Mitochondrial intermembrane-facing. The chain crosses the membrane as a helical span at residues proline 15–methionine 45. Residues leucine 46–glutamine 59 are Mitochondrial matrix-facing. A helical membrane pass occupies residues glutamate 60–methionine 87. Over aspartate 88–leucine 227 the chain is Mitochondrial intermembrane. Cu cation is bound by residues histidine 161, cysteine 196, glutamate 198, cysteine 200, histidine 204, and methionine 207. Glutamate 198 contributes to the Mg(2+) binding site.

The protein belongs to the cytochrome c oxidase subunit 2 family. Component of the cytochrome c oxidase (complex IV, CIV), a multisubunit enzyme composed of 14 subunits. The complex is composed of a catalytic core of 3 subunits MT-CO1, MT-CO2 and MT-CO3, encoded in the mitochondrial DNA, and 11 supernumerary subunits COX4I, COX5A, COX5B, COX6A, COX6B, COX6C, COX7A, COX7B, COX7C, COX8 and NDUFA4, which are encoded in the nuclear genome. The complex exists as a monomer or a dimer and forms supercomplexes (SCs) in the inner mitochondrial membrane with NADH-ubiquinone oxidoreductase (complex I, CI) and ubiquinol-cytochrome c oxidoreductase (cytochrome b-c1 complex, complex III, CIII), resulting in different assemblies (supercomplex SCI(1)III(2)IV(1) and megacomplex MCI(2)III(2)IV(2)). Found in a complex with TMEM177, COA6, COX18, COX20, SCO1 and SCO2. Interacts with TMEM177 in a COX20-dependent manner. Interacts with COX20. Interacts with COX16. The cofactor is Cu cation.

It is found in the mitochondrion inner membrane. It catalyses the reaction 4 Fe(II)-[cytochrome c] + O2 + 8 H(+)(in) = 4 Fe(III)-[cytochrome c] + 2 H2O + 4 H(+)(out). In terms of biological role, component of the cytochrome c oxidase, the last enzyme in the mitochondrial electron transport chain which drives oxidative phosphorylation. The respiratory chain contains 3 multisubunit complexes succinate dehydrogenase (complex II, CII), ubiquinol-cytochrome c oxidoreductase (cytochrome b-c1 complex, complex III, CIII) and cytochrome c oxidase (complex IV, CIV), that cooperate to transfer electrons derived from NADH and succinate to molecular oxygen, creating an electrochemical gradient over the inner membrane that drives transmembrane transport and the ATP synthase. Cytochrome c oxidase is the component of the respiratory chain that catalyzes the reduction of oxygen to water. Electrons originating from reduced cytochrome c in the intermembrane space (IMS) are transferred via the dinuclear copper A center (CU(A)) of subunit 2 and heme A of subunit 1 to the active site in subunit 1, a binuclear center (BNC) formed by heme A3 and copper B (CU(B)). The BNC reduces molecular oxygen to 2 water molecules using 4 electrons from cytochrome c in the IMS and 4 protons from the mitochondrial matrix. This Tupaia glis (Common tree shrew) protein is Cytochrome c oxidase subunit 2 (MT-CO2).